Here is a 602-residue protein sequence, read N- to C-terminus: Elongation factor 4 (602 aa).

The tr-type G domain occupies 7–189 (SKIRNFCIIA…AIVRRVPAPQ (183 aa)). GTP contacts are provided by residues 19-24 (DHGKST) and 136-139 (NKVD).

Belongs to the TRAFAC class translation factor GTPase superfamily. Classic translation factor GTPase family. LepA subfamily.

It is found in the cell inner membrane. It catalyses the reaction GTP + H2O = GDP + phosphate + H(+). Required for accurate and efficient protein synthesis under certain stress conditions. May act as a fidelity factor of the translation reaction, by catalyzing a one-codon backward translocation of tRNAs on improperly translocated ribosomes. Back-translocation proceeds from a post-translocation (POST) complex to a pre-translocation (PRE) complex, thus giving elongation factor G a second chance to translocate the tRNAs correctly. Binds to ribosomes in a GTP-dependent manner. In Prochlorococcus marinus (strain MIT 9312), this protein is Elongation factor 4.